Reading from the N-terminus, the 485-residue chain is Glutamyl-tRNA(Gln) amidotransferase subunit A (485 aa).

Residues Lys79 and Ser154 each act as charge relay system in the active site. The active-site Acyl-ester intermediate is the Ser178.

The protein belongs to the amidase family. GatA subfamily. Heterotrimer of A, B and C subunits.

It catalyses the reaction L-glutamyl-tRNA(Gln) + L-glutamine + ATP + H2O = L-glutaminyl-tRNA(Gln) + L-glutamate + ADP + phosphate + H(+). Its function is as follows. Allows the formation of correctly charged Gln-tRNA(Gln) through the transamidation of misacylated Glu-tRNA(Gln) in organisms which lack glutaminyl-tRNA synthetase. The reaction takes place in the presence of glutamine and ATP through an activated gamma-phospho-Glu-tRNA(Gln). This chain is Glutamyl-tRNA(Gln) amidotransferase subunit A, found in Staphylococcus carnosus (strain TM300).